The primary structure comprises 107 residues: U1-lycotoxin-Ls1p (107 aa).

A signal peptide spans 1-20 (MMKVLVVVALLVTLISYSSS). Residues 21–41 (EGIDDLEADELLSLMANEQTR) constitute a propeptide that is removed on maturation. 4 cysteine pairs are disulfide-bonded: cysteine 44–cysteine 59, cysteine 51–cysteine 68, cysteine 58–cysteine 86, and cysteine 70–cysteine 84.

It belongs to the neurotoxin 19 (CSTX) family. 04 (U1-Lctx) subfamily. As to expression, expressed by the venom gland.

The protein resides in the secreted. This is U1-lycotoxin-Ls1p from Lycosa singoriensis (Wolf spider).